The primary structure comprises 218 residues: Embryonic polyadenylate-binding protein 2-A (218 aa).

Positions 1–16 are enriched in basic and acidic residues; it reads MSERVSEEPGLDKGDG. Disordered regions lie at residues 1 to 26 and 169 to 218; these read MSERVSEEPGLDKGDGAEECELDDPE and RTNM…NHPY. The 78-residue stretch at 93 to 170 folds into the RRM domain; the sequence is RSVYVGNVDY…RTIKVLPKRT (78 aa). Residues 205–218 show a composition bias toward low complexity; it reads FRGCGRPGPLNHPY.

The protein localises to the cytoplasm. Functionally, binds the poly(A) tail of mRNA. Unable to interact with the cap-binding complex and is therefore unlikely to be involved in translation initiation. The chain is Embryonic polyadenylate-binding protein 2-A (Pabpn1l-a) from Xenopus laevis (African clawed frog).